Reading from the N-terminus, the 141-residue chain is Large ribosomal subunit protein uL11 (141 aa).

It belongs to the universal ribosomal protein uL11 family. In terms of assembly, part of the ribosomal stalk of the 50S ribosomal subunit. Interacts with L10 and the large rRNA to form the base of the stalk. L10 forms an elongated spine to which L12 dimers bind in a sequential fashion forming a multimeric L10(L12)X complex. In terms of processing, one or more lysine residues are methylated.

Forms part of the ribosomal stalk which helps the ribosome interact with GTP-bound translation factors. The polypeptide is Large ribosomal subunit protein uL11 (Streptococcus suis (strain 98HAH33)).